A 216-amino-acid polypeptide reads, in one-letter code: Sugar transporter SWEET1 (216 aa).

Helical transmembrane passes span 3–23, 36–56, 65–85, 96–116, 125–145, 157–177, and 181–201; these read WMWL…SSGL, ENIQ…WFYY, LMIV…AYLL, QVLV…LWIL, LGLF…ADLA, SFPL…YGLV, and LYIT…FWLF. One can recognise a MtN3/slv 1 domain in the interval 6–90; sequence LLSGACIVFT…GAYLLYSPER (85 aa). The MtN3/slv 2 domain occupies 124–206; sequence QLGLFCSVFT…RFWLFSQFPP (83 aa).

It belongs to the SWEET sugar transporter family.

Its subcellular location is the golgi apparatus membrane. The protein resides in the cell membrane. Its function is as follows. Mediates sugar transport across membranes. This Xenopus laevis (African clawed frog) protein is Sugar transporter SWEET1 (slc50a1).